A 283-amino-acid chain; its full sequence is (+)-borneol dehydrogenase 2 (283 aa).

Residues 27–33 (GGSSGIG), Asp-51, 76–77 (DV), and 103–105 (NAG) contribute to the NAD(+) site. The active-site Proton donor is the Ser-157. Residues Tyr-170, Lys-174, and Thr-205 each contribute to the NAD(+) site. Tyr-170 acts as the Proton acceptor in catalysis. Lys-174 serves as the catalytic Proton donor/acceptor.

It belongs to the short-chain dehydrogenases/reductases (SDR) family.

The enzyme catalyses (1R,2S,4R)-borneol + NAD(+) = (1R,4R)-camphor + NADH + H(+). In terms of biological role, involved in the biosynthesis of monoterpene natural products related to camphor. Catalayzes the oxidation of (+)-borneol to (+)-camphor. Shows absolute selectivity towards (+)-borneol. Catalyzes the oxidation of (+)-isoborneol to (-)-camphor. Shows absolute selectivity towards (+)-isoborneol. The polypeptide is (+)-borneol dehydrogenase 2 (Salvia officinalis (Sage)).